The following is a 445-amino-acid chain: Phosphoglucosamine mutase (445 aa).

Ser99 acts as the Phosphoserine intermediate in catalysis. Mg(2+)-binding residues include Ser99, Asp242, Asp244, and Asp246. The residue at position 99 (Ser99) is a Phosphoserine.

This sequence belongs to the phosphohexose mutase family. Requires Mg(2+) as cofactor. Activated by phosphorylation.

It catalyses the reaction alpha-D-glucosamine 1-phosphate = D-glucosamine 6-phosphate. Functionally, catalyzes the conversion of glucosamine-6-phosphate to glucosamine-1-phosphate. The sequence is that of Phosphoglucosamine mutase from Helicobacter pylori (strain P12).